The following is a 399-amino-acid chain: Succinate--CoA ligase [ADP-forming] subunit beta (399 aa).

In terms of domain architecture, ATP-grasp spans 9-254; it reads KAVLQPFGVS…TTEEDAKEIE (246 aa). Residues Lys-46, 53-55, Glu-109, Ser-112, and Glu-117 contribute to the ATP site; that span reads GRG. Positions 209 and 223 each coordinate Mg(2+). Residues Asn-274 and 331–333 each bind substrate; that span reads GIM.

The protein belongs to the succinate/malate CoA ligase beta subunit family. As to quaternary structure, heterotetramer of two alpha and two beta subunits. Requires Mg(2+) as cofactor.

It catalyses the reaction succinate + ATP + CoA = succinyl-CoA + ADP + phosphate. The catalysed reaction is GTP + succinate + CoA = succinyl-CoA + GDP + phosphate. Its pathway is carbohydrate metabolism; tricarboxylic acid cycle; succinate from succinyl-CoA (ligase route): step 1/1. Functionally, succinyl-CoA synthetase functions in the citric acid cycle (TCA), coupling the hydrolysis of succinyl-CoA to the synthesis of either ATP or GTP and thus represents the only step of substrate-level phosphorylation in the TCA. The beta subunit provides nucleotide specificity of the enzyme and binds the substrate succinate, while the binding sites for coenzyme A and phosphate are found in the alpha subunit. The protein is Succinate--CoA ligase [ADP-forming] subunit beta of Rhodopseudomonas palustris (strain BisA53).